Reading from the N-terminus, the 169-residue chain is Protein UL138 (169 aa).

The chain crosses the membrane as a helical span at residues 8–28 (VGLPIIGVMLVLIVAILCYLA). Residues 109-133 (DRRAGSSSSSSVHVANQRNSVPPPD) form a disordered region.

In terms of assembly, interacts with host TNFR1. Interacts with host MRP1. Interacts with host UAF1/WDR48. Interacts with host STING1.

The protein resides in the host Golgi apparatus membrane. In terms of biological role, plays an important role in the establishment of latent viral infection. Modulates the expression of several host cell surface receptors such as TNFR1, CD36 or the MRP1 transporter during productive infection. For instance, associates with host MRP1 and induces its lysosomal degradation. Plays an inhibitory role in the host cGAS/STING/TBK1 pathway and upstream of IRF3 phosphorylation and NF-kappa-B leading to inhibition of interferon beta production during both lytic and latent infections. Also participates in the establishment of latency by sustaining an innate immune response through phosphorylation and activation of host STAT1. In Human cytomegalovirus (strain Merlin) (HHV-5), this protein is Protein UL138 (UL138).